Consider the following 460-residue polypeptide: Cysteine--tRNA ligase (460 aa).

Cysteine 28 is a binding site for Zn(2+). Residues 30–40 (MTVYDYCHLGH) carry the 'HIGH' region motif. Zn(2+) is bound by residues cysteine 209, histidine 234, and glutamate 238. Residues 266–270 (KMSKS) carry the 'KMSKS' region motif. Lysine 269 contributes to the ATP binding site.

Belongs to the class-I aminoacyl-tRNA synthetase family. As to quaternary structure, monomer. Zn(2+) is required as a cofactor.

The protein localises to the cytoplasm. The enzyme catalyses tRNA(Cys) + L-cysteine + ATP = L-cysteinyl-tRNA(Cys) + AMP + diphosphate. This Pseudomonas putida (strain ATCC 700007 / DSM 6899 / JCM 31910 / BCRC 17059 / LMG 24140 / F1) protein is Cysteine--tRNA ligase.